Reading from the N-terminus, the 298-residue chain is Acetylglutamate kinase (298 aa).

Substrate contacts are provided by residues 69-70 (GG), R91, and N196.

It belongs to the acetylglutamate kinase family. ArgB subfamily.

The protein resides in the cytoplasm. The enzyme catalyses N-acetyl-L-glutamate + ATP = N-acetyl-L-glutamyl 5-phosphate + ADP. It functions in the pathway amino-acid biosynthesis; L-arginine biosynthesis; N(2)-acetyl-L-ornithine from L-glutamate: step 2/4. In terms of biological role, catalyzes the ATP-dependent phosphorylation of N-acetyl-L-glutamate. This Rhodopseudomonas palustris (strain BisA53) protein is Acetylglutamate kinase.